The following is a 197-amino-acid chain: Protein shisa-4 (197 aa).

Positions 1–27 are cleaved as a signal peptide; it reads MPPAGPRGTAPLAAVVLLVLGAPLALA. Over 28-87 the chain is Extracellular; the sequence is SEDCLWYLDRNGSWHPGFDCEFFTFCCGTCYQRYCCRDLTLLITERQQKHCLAFSPKTIA. A helical transmembrane segment spans residues 88–108; that stretch reads GIASAVILFVAVVATTICCFL. Over 109–197 the chain is Cytoplasmic; that stretch reads CSCCYLYRRR…MPPQPSYPGA (89 aa).

It belongs to the shisa family.

It is found in the membrane. The protein is Protein shisa-4 (Shisa4) of Mus musculus (Mouse).